Reading from the N-terminus, the 766-residue chain is Ent-copalyl diphosphate synthase 3 (766 aa).

Residues 1–30 (FRSTAAGRCLPVTCCVFPRHFRVSSSSILP) constitute a chloroplast transit peptide. Lys222 serves as a coordination point for substrate. Asp354 and Asp356 together coordinate Mg(2+). Residues 354 to 357 (DVDD) carry the DXDD motif motif. Lys440 is a binding site for substrate.

Belongs to the terpene synthase family. Tpsc subfamily. Mg(2+) is required as a cofactor. As to expression, accumulates in leaves, and, at low levels, in germinating seeds.

The protein localises to the plastid. The protein resides in the chloroplast. It catalyses the reaction (2E,6E,10E)-geranylgeranyl diphosphate = ent-copalyl diphosphate. The protein operates within plant hormone biosynthesis; gibberellin biosynthesis. It participates in secondary metabolite biosynthesis; terpenoid biosynthesis. Functionally, involved in the biosynthesis of ent-kaurene diterpenoids natural products such as oridonin, miltiradiene, eriocalyxin B and nezukol, known to exhibit antitumor, anti-inflammatory and antibacterial activities, and in the production of gibberellins phytohormones. Catalyzes the conversion of (2E,6E,10E)-geranylgeranyl diphosphate (GGPP) to ent-copalyl diphosphate (ent-CPP). The protein is Ent-copalyl diphosphate synthase 3 of Isodon eriocalyx (Plectranthus eriocalyx).